Reading from the N-terminus, the 558-residue chain is Laccase-10 (558 aa).

An N-terminal signal peptide occupies residues 1 to 22; sequence MVFPIRILVLFALLAFPACVHG. 2 consecutive Plastocyanin-like domains span residues 30–146 and 157–308; these read NVVT…PKLG and EEVI…YSGT. Residue Asn76 is glycosylated (N-linked (GlcNAc...) asparagine). Residues His80 and His82 each contribute to the Cu cation site. The N-linked (GlcNAc...) asparagine glycan is linked to Asn112. Cu cation-binding residues include His125 and His127. N-linked (GlcNAc...) asparagine glycosylation is found at Asn185, Asn296, Asn323, Asn373, Asn383, Asn400, and Asn441. The 135-residue stretch at 408-542 folds into the Plastocyanin-like 3 domain; sequence DFPAKPRRVF…KMAFLVENGK (135 aa). The Cu cation site is built by His459, His462, His464, His521, Cys522, His523, and His527. An N-linked (GlcNAc...) asparagine glycan is attached at Asn545.

It belongs to the multicopper oxidase family. Cu cation serves as cofactor. Ubiquitous, with lower levels in siliques.

It localises to the secreted. Its subcellular location is the extracellular space. It is found in the apoplast. The enzyme catalyses 4 hydroquinone + O2 = 4 benzosemiquinone + 2 H2O. Lignin degradation and detoxification of lignin-derived products. The sequence is that of Laccase-10 (LAC10) from Arabidopsis thaliana (Mouse-ear cress).